The following is a 315-amino-acid chain: Aldo-keto reductase family 4 member C11 (315 aa).

Position 2 is an N-acetylalanine (Ala-2). NADP(+) is bound by residues 23-24 (TW) and Asp-47. Tyr-52 functions as the Proton donor in the catalytic mechanism. Residues His-114, 158–159 (SN), Gln-180, 207–213 (SPLGSPG), 256–258 (KST), and 262–266 (RIREN) each bind NADP(+). Ser-295 carries the phosphoserine modification.

Belongs to the aldo/keto reductase family.

In terms of biological role, oxidoreductase that may act on a broad range of substrates such as ketosteroids, aldehydes, ketones and sugars. This is Aldo-keto reductase family 4 member C11 (AKR4C11) from Arabidopsis thaliana (Mouse-ear cress).